A 385-amino-acid chain; its full sequence is GTPase Obg (385 aa).

Positions methionine 1–leucine 159 constitute an Obg domain. One can recognise an OBG-type G domain in the interval alanine 160 to glutamate 333. GTP contacts are provided by residues glycine 166–serine 173, phenylalanine 191–isoleucine 195, aspartate 213–glycine 216, asparagine 283–aspartate 286, and serine 314–isoleucine 316. Residues serine 173 and threonine 193 each contribute to the Mg(2+) site.

This sequence belongs to the TRAFAC class OBG-HflX-like GTPase superfamily. OBG GTPase family. In terms of assembly, monomer. Mg(2+) is required as a cofactor.

It localises to the cytoplasm. Functionally, an essential GTPase which binds GTP, GDP and possibly (p)ppGpp with moderate affinity, with high nucleotide exchange rates and a fairly low GTP hydrolysis rate. Plays a role in control of the cell cycle, stress response, ribosome biogenesis and in those bacteria that undergo differentiation, in morphogenesis control. The polypeptide is GTPase Obg (Pseudoalteromonas translucida (strain TAC 125)).